Here is a 199-residue protein sequence, read N- to C-terminus: Large ribosomal subunit protein uL18 (199 aa).

This sequence belongs to the universal ribosomal protein uL18 family. In terms of assembly, part of the 50S ribosomal subunit. Contacts the 5S and 23S rRNAs.

In terms of biological role, this is one of the proteins that bind and probably mediate the attachment of the 5S RNA into the large ribosomal subunit, where it forms part of the central protuberance. This chain is Large ribosomal subunit protein uL18, found in Saccharolobus solfataricus (strain ATCC 35092 / DSM 1617 / JCM 11322 / P2) (Sulfolobus solfataricus).